Reading from the N-terminus, the 176-residue chain is UBA-like domain-containing protein 1 (176 aa).

Residues 87–176 (SESFHGGGGS…RAHPAMEAER (90 aa)) form a disordered region. Positions 120 to 137 (TPSWPTAASPPGGPQQHQ) are enriched in low complexity. Pro residues predominate over residues 138-150 (PQPPLWTPAPPSP). Positions 166–176 (PRAHPAMEAER) are enriched in basic and acidic residues.

The protein belongs to the UBALD family.

The sequence is that of UBA-like domain-containing protein 1 (Ubald1) from Mus musculus (Mouse).